We begin with the raw amino-acid sequence, 64 residues long: Beta-toxin Tf1 (64 aa).

Residues 1-62 form the LCN-type CS-alpha/beta domain; the sequence is KEGYLMDHEG…VWERATNRCG (62 aa). Disulfide bonds link C11/C61, C15/C37, C23/C42, and C27/C44. C61 is subject to Cysteine amide.

Belongs to the long (4 C-C) scorpion toxin superfamily. Sodium channel inhibitor family. Beta subfamily. As to expression, expressed by the venom gland.

The protein resides in the secreted. Functionally, beta toxins bind voltage-independently at site-4 of sodium channels (Nav) and shift the voltage of activation toward more negative potentials thereby affecting sodium channel activation and promoting spontaneous and repetitive firing. In Tityus fasciolatus (Central Brazilian scorpion), this protein is Beta-toxin Tf1.